Consider the following 577-residue polypeptide: Zona pellucida sperm-binding protein 3 receptor (577 aa).

An N-terminal signal peptide occupies residues Met1–Gly32. 6 consecutive Sushi domains span residues Asp33 to Arg92, Lys93 to Ile154, Ala155 to Lys219, Ile220 to Pro279, Asn280 to Arg346, and Val347 to Ala412. Cystine bridges form between Cys34-Cys78, Cys64-Cys90, Cys95-Cys136, Cys122-Cys152, Cys157-Cys200, Cys186-Cys217, Cys222-Cys264, Cys250-Cys277, Cys282-Cys332, Cys316-Cys344, Cys349-Cys397, and Cys382-Cys410. Residues Asn72 and Asn81 are each glycosylated (N-linked (GlcNAc...) asparagine). Residues Asn144, Asn195, and Asn204 are each glycosylated (N-linked (GlcNAc...) asparagine). A glycan (N-linked (GlcNAc...) asparagine) is linked at Asn335. N-linked (GlcNAc...) asparagine glycans are attached at residues Asn426, Asn431, Asn434, Asn443, Asn462, Asn475, and Asn497. The region spanning Ala451–Met509 is the Sushi 7 domain. Intrachain disulfides connect Cys453–Cys494 and Cys480–Cys507.

As to quaternary structure, homomultimer; disulfide-linked. Post-translationally, glycosylated. In terms of tissue distribution, testis specific.

Its subcellular location is the cytoplasmic vesicle. The protein resides in the secretory vesicle. It localises to the acrosome lumen. Binds to ZP3 glycoprotein in egg zona pellucida. Probably involved in interactions between sperm acrosome and egg zona pellucida during and immediately following the acrosome reaction. This chain is Zona pellucida sperm-binding protein 3 receptor (Zp3r), found in Rattus norvegicus (Rat).